The following is a 185-amino-acid chain: Protein GrpE (185 aa).

Belongs to the GrpE family. Homodimer.

It is found in the cytoplasm. In terms of biological role, participates actively in the response to hyperosmotic and heat shock by preventing the aggregation of stress-denatured proteins, in association with DnaK and GrpE. It is the nucleotide exchange factor for DnaK and may function as a thermosensor. Unfolded proteins bind initially to DnaJ; upon interaction with the DnaJ-bound protein, DnaK hydrolyzes its bound ATP, resulting in the formation of a stable complex. GrpE releases ADP from DnaK; ATP binding to DnaK triggers the release of the substrate protein, thus completing the reaction cycle. Several rounds of ATP-dependent interactions between DnaJ, DnaK and GrpE are required for fully efficient folding. The sequence is that of Protein GrpE from Methanobrevibacter smithii (strain ATCC 35061 / DSM 861 / OCM 144 / PS).